A 692-amino-acid chain; its full sequence is DNA repair protein RAD34 (692 aa).

Residues 1–38 (MAKRLLESSQNDQANRKNSKIEKKEVSFYEEEETDDSF) are disordered. The span at 28-38 (FYEEEETDDSF) shows a compositional bias: acidic residues.

The protein belongs to the XPC family.

It is found in the nucleus. In terms of biological role, involved in nucleotide excision repair (NER) of damaged ribosomal DNA (rDNA). Required for the repair of the RNA polymerase I-transcribed strand of rDNA. The polypeptide is DNA repair protein RAD34 (RAD34) (Saccharomyces cerevisiae (strain ATCC 204508 / S288c) (Baker's yeast)).